A 426-amino-acid polypeptide reads, in one-letter code: Cuticle-degrading serine protease (426 aa).

The first 21 residues, Met-1–Ala-21, serve as a signal peptide directing secretion. A propeptide spanning residues Gly-22–Tyr-123 is cleaved from the precursor. Residues Lys-39–Thr-122 form the Inhibitor I9 domain. One can recognise a Peptidase S8 domain in the interval Thr-130–Ser-426. The Charge relay system role is filled by Asp-164. Asn-178 is a glycosylation site (N-linked (GlcNAc...) asparagine). His-200 (charge relay system) is an active-site residue. Asn-252 carries N-linked (GlcNAc...) asparagine glycosylation. Ser-353 acts as the Charge relay system in catalysis.

Belongs to the peptidase S8 family.

It is found in the secreted. With respect to regulation, inhibited by PMSF, SSI, the peptide Phe-Val and by Phe, but not by EDTA. Functionally, hydrolyzes gelatin, casein, the chromogenic substrate azocoll and the cuticle of the nematode P.redivivus. Immobilizes P.redivivus. This chain is Cuticle-degrading serine protease, found in Orbilia oligospora (Nematode-trapping fungus).